Reading from the N-terminus, the 361-residue chain is Large ribosomal subunit protein mL45 (361 aa).

The protein belongs to the mitochondrion-specific ribosomal protein mL45 family.

Its subcellular location is the mitochondrion. This is Large ribosomal subunit protein mL45 (mrpl-45) from Caenorhabditis briggsae.